Here is a 1043-residue protein sequence, read N- to C-terminus: BAG family molecular chaperone regulator 6 (1043 aa).

Disordered regions lie at residues 253 to 294 (KEEL…GKTV), 311 to 331 (DVKEAQNQKNKEEPGQVPYPI), 343 to 366 (VEASESKESSNEGRNLESCPSDLH), 410 to 500 (NIPV…AESR), and 533 to 566 (SVESNSNLQEESNGEIIKPCEAKENREQPAKKSF). Composition is skewed to basic and acidic residues over residues 311 to 324 (DVKEAQNQKNKEEP), 343 to 357 (VEASESKESSNEGRN), 416 to 443 (SENHLPKPTEPTKRIAKNEPVKSTKKEQ), and 478 to 487 (KRMEKSKETK). Over residues 534-543 (VESNSNLQEE) the composition is skewed to polar residues. The span at 550–566 (KPCEAKENREQPAKKSF) shows a compositional bias: basic and acidic residues. Residues 568–597 (EEEAARIIQSMYRGYDVRRWEPIKKLKEIA) enclose the IQ domain. Positions 595–672 (EIATVREQMG…SIQDKLDSLK (78 aa)) constitute a BAG domain. Over residues 724-741 (SPEEHPMSVLNRTDEKQA) the composition is skewed to basic and acidic residues. Disordered regions lie at residues 724–749 (SPEEHPMSVLNRTDEKQAESAAETEE), 764–799 (ATENAAAASSTTIPEKIGEVETVVPGNPPSADGNGM), 817–975 (EPIN…ISKE), and 1015–1043 (EKKLSHKKKTQIRRRASKPMSVSPTDAVL). Over residues 840-852 (ASEVSEAETNSSE) the composition is skewed to low complexity. Residues 853–871 (NENRKGEDDIVLHSEKNVE) show a composition bias toward basic and acidic residues. Composition is skewed to polar residues over residues 885–899 (QPLSQDPSSSYTREG) and 919–932 (SPNNSKGIGQQTSE). Basic and acidic residues predominate over residues 934-951 (QDEKEQSPETEVIVKEQP). A coiled-coil region spans residues 971–1024 (GISKETKKLMEENQRFKETMETLVKAGREQLEVISKLTSRVKSLEKKLSHKKKT). Residues 1018–1031 (LSHKKKTQIRRRAS) show a composition bias toward basic residues. The segment covering 1034–1043 (MSVSPTDAVL) has biased composition (polar residues).

Binds to the ATPase domain of HSP70/HSC70 chaperones. Interacts with calmodulins CAM1, CAM2, CAM3, CAM4, CAM6 and CAM7. Interacts with BAGP1 and APCB1. As to expression, detected in stems, leaves, flowers and roots.

Functionally, co-chaperone that regulates diverse cellular pathways, such as programmed cell death and stress responses. Involved in plant basal resistance. Involved in basal heat response through the regulation of the heat induced small HSP (sHSP) transcriptional cascade. In terms of biological role, induces autophagy. This Arabidopsis thaliana (Mouse-ear cress) protein is BAG family molecular chaperone regulator 6.